A 493-amino-acid chain; its full sequence is Dipeptide permease D (493 aa).

Helical transmembrane passes span 14–34 (VVAL…LLIL), 49–69 (ELFS…GYLA), 91–111 (LVLG…AIIV), 138–158 (GGFS…PIAC), 167–187 (WAMG…IFLC), 212–232 (NWGW…VLFW), 235–255 (WSVY…AKIY), 267–287 (LGLI…AQQG), 312–332 (MFQS…AWLV), 344–364 (IWGK…ILTL), 379–399 (LMVL…PVAM), 413–433 (VLTG…AGVI), and 458–478 (VFEQ…LIWL).

The protein belongs to the major facilitator superfamily. Proton-dependent oligopeptide transporter (POT/PTR) (TC 2.A.17) family. DtpD subfamily.

It is found in the cell inner membrane. Its function is as follows. Probable proton-dependent permease that transports dipeptides. This chain is Dipeptide permease D, found in Salmonella paratyphi C (strain RKS4594).